Here is a 206-residue protein sequence, read N- to C-terminus: 7-methyl-GTP pyrophosphatase (206 aa).

Asp82 acts as the Proton acceptor in catalysis.

This sequence belongs to the Maf family. YceF subfamily. A divalent metal cation is required as a cofactor.

It localises to the cytoplasm. It carries out the reaction N(7)-methyl-GTP + H2O = N(7)-methyl-GMP + diphosphate + H(+). Nucleoside triphosphate pyrophosphatase that hydrolyzes 7-methyl-GTP (m(7)GTP). May have a dual role in cell division arrest and in preventing the incorporation of modified nucleotides into cellular nucleic acids. The protein is 7-methyl-GTP pyrophosphatase of Shewanella denitrificans (strain OS217 / ATCC BAA-1090 / DSM 15013).